The following is a 482-amino-acid chain: UDP-N-acetylmuramate--L-alanine ligase (482 aa).

123-129 provides a ligand contact to ATP; the sequence is GTHGKTT.

This sequence belongs to the MurCDEF family.

Its subcellular location is the cytoplasm. The catalysed reaction is UDP-N-acetyl-alpha-D-muramate + L-alanine + ATP = UDP-N-acetyl-alpha-D-muramoyl-L-alanine + ADP + phosphate + H(+). The protein operates within cell wall biogenesis; peptidoglycan biosynthesis. Functionally, cell wall formation. The polypeptide is UDP-N-acetylmuramate--L-alanine ligase (Pseudomonas putida (strain ATCC 47054 / DSM 6125 / CFBP 8728 / NCIMB 11950 / KT2440)).